The following is a 210-amino-acid chain: Somatotropin (210 aa).

Positions 1 to 22 (MGQVFLLMPVLLVSCFLSQGAA) are cleaved as a signal peptide. Histidine 38 lines the Zn(2+) pocket. A disulfide bridge links cysteine 71 with cysteine 183. Position 192 (glutamate 192) interacts with Zn(2+). Cysteine 200 and cysteine 208 are joined by a disulfide.

It belongs to the somatotropin/prolactin family.

Its subcellular location is the secreted. Functionally, growth hormone plays an important role in growth control and is involved in the regulation of several anabolic processes. Implicated as an osmoregulatory substance important for seawater adaptation. This Oncorhynchus tshawytscha (Chinook salmon) protein is Somatotropin (gh).